A 531-amino-acid chain; its full sequence is Cytosolic Fe-S cluster assembly factor NAR1 (531 aa).

Residues cysteine 20, cysteine 72, cysteine 75, cysteine 78, cysteine 184, and cysteine 239 each coordinate [4Fe-4S] cluster. The disordered stretch occupies residues 395–426 (TSSTTTTKTNPLVARRKARLSSKRSESGAQDV). Positions 442 and 446 each coordinate [4Fe-4S] cluster.

It belongs to the NARF family.

Its function is as follows. Component of the cytosolic Fe/S protein assembly machinery. Required for maturation of extramitochondrial Fe/S proteins. May play a role in the transfer of pre-assembled Fe/S clusters to target apoproteins. The polypeptide is Cytosolic Fe-S cluster assembly factor NAR1 (NAR1) (Meyerozyma guilliermondii (strain ATCC 6260 / CBS 566 / DSM 6381 / JCM 1539 / NBRC 10279 / NRRL Y-324) (Yeast)).